A 198-amino-acid polypeptide reads, in one-letter code: Glycerol-3-phosphate acyltransferase (198 aa).

5 consecutive transmembrane segments (helical) span residues 1–21, 77–97, 111–131, 136–156, and 157–177; these read MTII…GFLF, HLFE…PIWL, MFIA…LIIL, IVSL…FLDI, and GVTN…VILK.

Belongs to the PlsY family. As to quaternary structure, probably interacts with PlsX.

Its subcellular location is the cell inner membrane. It catalyses the reaction an acyl phosphate + sn-glycerol 3-phosphate = a 1-acyl-sn-glycero-3-phosphate + phosphate. Its pathway is lipid metabolism; phospholipid metabolism. Catalyzes the transfer of an acyl group from acyl-phosphate (acyl-PO(4)) to glycerol-3-phosphate (G3P) to form lysophosphatidic acid (LPA). This enzyme utilizes acyl-phosphate as fatty acyl donor, but not acyl-CoA or acyl-ACP. This chain is Glycerol-3-phosphate acyltransferase, found in Prochlorococcus marinus (strain MIT 9515).